An 802-amino-acid chain; its full sequence is Putative flavin carrier protein 3 (802 aa).

The signal sequence occupies residues 1–28; it reads MRFLQVYKSSALIGLIILLASKVNLAEA. Residues 29 to 169 are Lumenal-facing; that stretch reads KRKLVATSLV…YFSNGKTVSQ (141 aa). Asparagine 149 is a glycosylation site (N-linked (GlcNAc...) asparagine). The chain crosses the membrane as a helical span at residues 170–190; that stretch reads IGVKWATAVVAGIGLLLSAIL. At 191 to 200 the chain is on the cytoplasmic side; the sequence is STFGNSTAAS. The chain crosses the membrane as a helical span at residues 201 to 221; that stretch reads HISANTMSLFLYFQSVVVVAM. Residues 222–229 lie on the Lumenal side of the membrane; it reads QHVHRVPP. Residues 230-250 traverse the membrane as a helical segment; sequence IAAAWAENLVWSMGLIRISFM. Topologically, residues 251–255 are cytoplasmic; sequence QRIFR. The chain crosses the membrane as a helical span at residues 256-278; sequence WYVQSTGGTPSLYLTSTSMSVLA. Over 279–323 the chain is Lumenal; it reads QRSWQYLMELPLIKRATNVLYGNANTLIFRGIKRLGYKMGIENTS. Residue asparagine 321 is glycosylated (N-linked (GlcNAc...) asparagine). A helical membrane pass occupies residues 324-344; that stretch reads IVCTGFTFFVLCGYVLAGFII. The Cytoplasmic segment spans residues 345–377; sequence VFKCCVELATRLGWIQKARFWEFRKQWRMILKG. The helical transmembrane segment at 378 to 398 threads the bilayer; sequence ALLRYIYIGFVQLTILSFWEF. The Lumenal segment spans residues 399-405; sequence TERDSPA. A helical membrane pass occupies residues 406-426; that stretch reads VIVIACLFILLSCGLMLWAAW. The Cytoplasmic segment spans residues 427 to 467; that stretch reads RTVFFARRSVALYNNPAALLYGDEYVLHKYGFFYTMFNANH. Residues 468-488 form a helical membrane-spanning segment; the sequence is YWWNIVLLSYIFVKSLLVGFA. The Lumenal portion of the chain corresponds to 489-495; it reads QASGQTQ. Residues 496–516 form a helical membrane-spanning segment; it reads VLFMFILDLFYFVAIIYYKPY. Over 517–525 the chain is Cytoplasmic; it reads LDRPTNIMN. A helical transmembrane segment spans residues 526–546; it reads ILIATVTVVNSFLFMFFSDLF. An N-linked (GlcNAc...) asparagine glycan is attached at asparagine 547. Over 547–557 the chain is Lumenal; the sequence is NQSYKVAAIMG. The chain crosses the membrane as a helical span at residues 558–578; it reads WIFFIMNAAFSFILLMMILAF. Residues 579–802 lie on the Cytoplasmic side of the membrane; that stretch reads AGMMLFSKNP…PPGFFDEGFM (224 aa). Phosphoserine occurs at positions 616 and 635. Residues 629–802 are disordered; the sequence is KDHDDNSDYE…PPGFFDEGFM (174 aa). 3 stretches are compositionally biased toward polar residues: residues 653-663, 697-717, and 761-788; these read DETTPTTVTSS, KQQTFPHNLTNLSRENLSTLG, and DTSSSDGGFRSQNYVRDDSINSLGNNKQ. Phosphoserine occurs at positions 779 and 782.

Belongs to the transient receptor potential (TRP) ion channel family.

Its subcellular location is the endoplasmic reticulum membrane. Functionally, may be responsible for the transport of FAD into the endoplasmic reticulum lumen, where it is required for oxidative protein folding. The polypeptide is Putative flavin carrier protein 3 (FLC3) (Saccharomyces cerevisiae (strain ATCC 204508 / S288c) (Baker's yeast)).